The sequence spans 83 residues: Cytochrome c-554(548) (83 aa).

Heme c contacts are provided by cysteine 14, cysteine 17, histidine 18, and methionine 63.

Homodimer. Post-translationally, binds 1 heme c group covalently per subunit.

The chain is Cytochrome c-554(548) from Halomonas halodenitrificans (strain ATCC 12084 / NCIMB 8669) (Paracoccus halodenitrificans).